Reading from the N-terminus, the 309-residue chain is tRNA pseudouridine synthase B (309 aa).

The Nucleophile role is filled by Asp51.

Belongs to the pseudouridine synthase TruB family. Type 1 subfamily.

The enzyme catalyses uridine(55) in tRNA = pseudouridine(55) in tRNA. Its function is as follows. Responsible for synthesis of pseudouridine from uracil-55 in the psi GC loop of transfer RNAs. This is tRNA pseudouridine synthase B from Coxiella burnetii (strain RSA 493 / Nine Mile phase I).